Consider the following 1075-residue polypeptide: Paired amphipathic helix protein pst2 (1075 aa).

3 PAH domains span residues Ser-28–Ser-102, Leu-138–Ser-208, and Arg-243–Ser-319. Ser-641 and Ser-643 each carry phosphoserine. Residues Leu-647–Gln-700 form a disordered region. The span at Gly-658–Gly-675 shows a compositional bias: basic and acidic residues. A compositionally biased stretch (low complexity) spans Asn-676–Gly-691.

In terms of assembly, heterotetramer of alp13, clr6, prw1 and pst2.

Its subcellular location is the nucleus. Has a role in chromatin assembly and chromosome segregation. Involved in the deacetylation of histones. This is Paired amphipathic helix protein pst2 (pst2) from Schizosaccharomyces pombe (strain 972 / ATCC 24843) (Fission yeast).